The sequence spans 407 residues: Probable peptidoglycan glycosyltransferase FtsW (407 aa).

Over 1-25 (MSIDFRNIIKPYPSPIITGRGIDLD) the chain is Cytoplasmic. A helical membrane pass occupies residues 26–46 (FPMLAGCLALLGLGLVMITSA). Topologically, residues 47–65 (SSEVAAVQSGNTLYMMIRH) are periplasmic. Residues 66–86 (LVYLVIGLGACIVTMMIPIAT) traverse the membrane as a helical segment. Residues 87–89 (WQR) lie on the Cytoplasmic side of the membrane. The helical transmembrane segment at 90–110 (LGWLMLIGAFGLLIMVILPGI) threads the bilayer. Topologically, residues 111–119 (GREVNGSMR) are periplasmic. Residues 120 to 140 (WIGFGAFNVQPSEIAKVFVVI) traverse the membrane as a helical segment. Residues 141 to 155 (YLAGYLVRRQKEVRE) are Cytoplasmic-facing. The chain crosses the membrane as a helical span at residues 156 to 176 (SWMGFFKPFIVLLPMAGLLLM). Residues 177–181 (EPDFG) are Periplasmic-facing. Residues 182–202 (ATVVMMGAAAAMLFLGGVGLF) form a helical membrane-spanning segment. Position 203 (arginine 203) is a topological domain, cytoplasmic. Residues 204–224 (FTLMVVLAVAAVTVLVQAQPY) traverse the membrane as a helical segment. The Periplasmic segment spans residues 225–283 (RMARLITFTDPWSDQFGSGYQLTQALIAFGRGEWLGVGLGNSVQKQFYLPEAHTDFVFS). Residues 284 to 304 (VLAEELGVVGSLCTVALFVFV) form a helical membrane-spanning segment. The Cytoplasmic portion of the chain corresponds to 305–321 (CVRGMYIGMWAEKAKQY). The chain crosses the membrane as a helical span at residues 322–342 (FAAYVAYGLSFLWIGQFLINI). The Periplasmic portion of the chain corresponds to 343–355 (GVNVGLLPTKGLT). Residues 356–376 (LPFLSYGGSSLVICCACLGLL) form a helical membrane-spanning segment. The Cytoplasmic portion of the chain corresponds to 377–407 (LRIEWESRTHLGSEEMEFSESDFAEEPTHGR).

Belongs to the SEDS family. FtsW subfamily.

The protein localises to the cell inner membrane. It catalyses the reaction [GlcNAc-(1-&gt;4)-Mur2Ac(oyl-L-Ala-gamma-D-Glu-L-Lys-D-Ala-D-Ala)](n)-di-trans,octa-cis-undecaprenyl diphosphate + beta-D-GlcNAc-(1-&gt;4)-Mur2Ac(oyl-L-Ala-gamma-D-Glu-L-Lys-D-Ala-D-Ala)-di-trans,octa-cis-undecaprenyl diphosphate = [GlcNAc-(1-&gt;4)-Mur2Ac(oyl-L-Ala-gamma-D-Glu-L-Lys-D-Ala-D-Ala)](n+1)-di-trans,octa-cis-undecaprenyl diphosphate + di-trans,octa-cis-undecaprenyl diphosphate + H(+). The protein operates within cell wall biogenesis; peptidoglycan biosynthesis. Its function is as follows. Peptidoglycan polymerase that is essential for cell division. This is Probable peptidoglycan glycosyltransferase FtsW from Pseudomonas fluorescens (strain SBW25).